Reading from the N-terminus, the 142-residue chain is Probable transport accessory protein MmpS1 (142 aa).

Transmembrane regions (helical) follow at residues 8–28 and 81–101; these read FWIP…VSRL and VVNA…AVVA.

This sequence belongs to the MmpS family.

It localises to the cell membrane. The sequence is that of Probable transport accessory protein MmpS1 (mmpS1) from Mycobacterium bovis (strain ATCC BAA-935 / AF2122/97).